We begin with the raw amino-acid sequence, 98 residues long: ESAT-6-like protein EsxK (98 aa).

It belongs to the WXG100 family. CFP-10 subfamily. Strongly interacts with EsxL to form a heterodimeric complex under reducing conditions.

Its subcellular location is the secreted. This is ESAT-6-like protein EsxK from Mycobacterium tuberculosis (strain CDC 1551 / Oshkosh).